The sequence spans 45 residues: Large ribosomal subunit protein bL34 (45 aa).

The segment at 1–45 (MTKRTFGGTSRKRKRVSGFRVRMRSHTGRRVIKSRRQKGRERIAV) is disordered. Positions 10-39 (SRKRKRVSGFRVRMRSHTGRRVIKSRRQKG) are enriched in basic residues.

It belongs to the bacterial ribosomal protein bL34 family.

The sequence is that of Large ribosomal subunit protein bL34 from Prochlorococcus marinus (strain MIT 9301).